Reading from the N-terminus, the 359-residue chain is Phosphoserine aminotransferase (359 aa).

R41 is a binding site for L-glutamate. Pyridoxal 5'-phosphate-binding positions include 75-76, W101, T152, D171, and Q194; that span reads AS. Position 195 is an N6-(pyridoxal phosphate)lysine (K195). 236–237 is a pyridoxal 5'-phosphate binding site; that stretch reads NT.

Belongs to the class-V pyridoxal-phosphate-dependent aminotransferase family. SerC subfamily. Homodimer. It depends on pyridoxal 5'-phosphate as a cofactor.

It localises to the cytoplasm. It catalyses the reaction O-phospho-L-serine + 2-oxoglutarate = 3-phosphooxypyruvate + L-glutamate. The catalysed reaction is 4-(phosphooxy)-L-threonine + 2-oxoglutarate = (R)-3-hydroxy-2-oxo-4-phosphooxybutanoate + L-glutamate. It functions in the pathway amino-acid biosynthesis; L-serine biosynthesis; L-serine from 3-phospho-D-glycerate: step 2/3. It participates in cofactor biosynthesis; pyridoxine 5'-phosphate biosynthesis; pyridoxine 5'-phosphate from D-erythrose 4-phosphate: step 3/5. Its function is as follows. Catalyzes the reversible conversion of 3-phosphohydroxypyruvate to phosphoserine and of 3-hydroxy-2-oxo-4-phosphonooxybutanoate to phosphohydroxythreonine. The sequence is that of Phosphoserine aminotransferase from Acinetobacter baumannii (strain AB307-0294).